The following is a 117-amino-acid chain: Urease subunit beta (117 aa).

The tract at residues 95–117 is disordered; that stretch reads NAVNGKLDGGPHPGVPATERGAK.

This sequence belongs to the urease beta subunit family. Heterotrimer of UreA (gamma), UreB (beta) and UreC (alpha) subunits. Three heterotrimers associate to form the active enzyme.

It is found in the cytoplasm. It catalyses the reaction urea + 2 H2O + H(+) = hydrogencarbonate + 2 NH4(+). The protein operates within nitrogen metabolism; urea degradation; CO(2) and NH(3) from urea (urease route): step 1/1. The protein is Urease subunit beta of Pseudarthrobacter chlorophenolicus (strain ATCC 700700 / DSM 12829 / CIP 107037 / JCM 12360 / KCTC 9906 / NCIMB 13794 / A6) (Arthrobacter chlorophenolicus).